The following is a 296-amino-acid chain: Vacuolar histidine transporter YPQ3 (296 aa).

Residues 1–12 (MKLIPIILNAKN) are Vacuolar-facing. A PQ-loop 1 domain is found at 10 to 76 (AKNLSGMAGS…QNLLPTMIIL (67 aa)). A helical membrane pass occupies residues 13–33 (LSGMAGSISICCWIVVFVPQI). Topologically, residues 34 to 44 (YENFRRQSAEG) are cytoplasmic. Residues 45–65 (LSLLFIVLWLLGDIFNVMGAM) traverse the membrane as a helical segment. Topologically, residues 66–68 (MQN) are vacuolar. Residues 69–89 (LLPTMIILAAYYTLADLILLI) form a helical membrane-spanning segment. At 90–163 (QCMWYDKEKK…RTIVVKEREN (74 aa)) the chain is on the cytoplasmic side. Residues 164-184 (FFNDFLIVSGVLIAGILSWYI) traverse the membrane as a helical segment. At 185–199 (SYCSGLDNGIPKKKP) the chain is on the vacuolar side. The helical transmembrane segment at 200 to 220 (AFEQINLPAQILGYLSAILYL) threads the bilayer. In terms of domain architecture, PQ-loop 2 spans 208–270 (AQILGYLSAI…ASWLIGSAGT (63 aa)). At 221–238 (GSRIPQIVLNFKRKSCEG) the chain is on the cytoplasmic side. A helical membrane pass occupies residues 239-259 (VSFLFFLFACLGNTSFIISVL). Residues 260 to 262 (SAS) lie on the Vacuolar side of the membrane. The chain crosses the membrane as a helical span at residues 263–283 (WLIGSAGTLLMDFTVFIQFFL). Residues 284-296 (YAKPKYEKILIDN) are Cytoplasmic-facing.

It belongs to the laat-1 family.

The protein resides in the vacuole membrane. It localises to the mitochondrion membrane. Functionally, amino acid transporter that moves histidine into the vacuole. May also contribute to low affinity arginine import into the vacuole. May function as an amino acid/proton antiporter. The protein is Vacuolar histidine transporter YPQ3 of Saccharomyces cerevisiae (strain ATCC 204508 / S288c) (Baker's yeast).